The chain runs to 428 residues: MKRGGRDSDRNSSEEGTAEKSKKLRTTNEHSQTCDWGNLLQDIILQVFKYLPLLDRAHASQVCRNWNQVFHMPDLWRCFEFELNQPATSYLKATHPELIKQIIKRHSNHLQYVSFKVDSSKESAEAACDILSQLVNCSLKTLGLISTARPSFMDLPKSHFISALTVVFVNSKSLSSLKIDDTPVDDPSLKVLVANNSDTLKLLKMSSCPHVSPAGILCVADQCHGLRELALNYHLLSDELLLALSSEKHVRLEHLRIDVVSENPGQTHFHTIQKSSWDAFIRHSPKVNLVMYFFLYEEEFDPFFRYEIPATHLYFGRSVSKDVLGRVGMTCPRLVELVVCANGLRPLDEELIRIAERCKNLSAIGLGECEVSCSAFVEFVKMCGGRLSQLSIMEEVLIPDQKYSLEQIHWEVSKHLGRVWFPDMMPTW.

Basic and acidic residues predominate over residues 1-21 (MKRGGRDSDRNSSEEGTAEKS). The interval 1-27 (MKRGGRDSDRNSSEEGTAEKSKKLRTT) is disordered. One can recognise an F-box domain in the interval 34–81 (CDWGNLLQDIILQVFKYLPLLDRAHASQVCRNWNQVFHMPDLWRCFEF). LRR repeat units lie at residues 119–146 (SSKESAEAACDILSQLVNCSLKTLGLIS), 181–207 (DTPVDDPSLKVLVANNSDTLKLLKMSS), 208–233 (CPHVSPAGILCVADQCHGLRELALNY), 234–259 (HLLSDELLLALSSEKHVRLEHLRIDV), 316–341 (GRSVSKDVLGRVGMTCPRLVELVVCA), 343–368 (GLRPLDEELIRIAERCKNLSAIGLGE), and 369–394 (CEVSCSAFVEFVKMCGGRLSQLSIME).

In terms of assembly, part of the SCF (SKP1-CUL1-F-box) E3 ubiquitin-protein ligase complex SCF(FBXL3) composed of CUL1, SKP1, RBX1 and FBXL3. Interacts with CRY1 and CRY2 (phosphorylated). Interacts with HDAC3. Interacts with KDM8. Post-translationally, undergoes autophagy-mediated degradation in the liver in a time-dependent manner. As to expression, widely expressed.

It localises to the nucleus. The protein resides in the cytoplasm. The protein operates within protein modification; protein ubiquitination. Its function is as follows. Substrate-recognition component of the SCF(FBXL3) E3 ubiquitin ligase complex involved in circadian rhythm function. Plays a key role in the maintenance of both the speed and the robustness of the circadian clock oscillation. The SCF(FBXL3) complex mainly acts in the nucleus and mediates ubiquitination and subsequent degradation of CRY1 and CRY2. Activity of the SCF(FBXL3) complex is counteracted by the SCF(FBXL21) complex. This Homo sapiens (Human) protein is F-box/LRR-repeat protein 3 (FBXL3).